We begin with the raw amino-acid sequence, 586 residues long: ATPase family AAA domain-containing protein 3A (586 aa).

2 disordered regions span residues 1–55 and 111–134; these read MSWL…PTGL and QAEE…QYQD. Serine 2 carries the N-acetylserine modification. Residues 2–50 are required for interaction with the inner surface of the mitochondrial outer membrane; the sequence is SWLFGINKGPKGEGAGPPPPLPPAQPGAEGGGDRGLGDRPAPKDKWSNF. Over 2 to 246 the chain is Mitochondrial intermembrane; that stretch reads SWLFGINKGP…FRAFVTDWDK (245 aa). Pro residues predominate over residues 17-26; it reads GPPPPLPPAQ. 2 stretches are compositionally biased toward basic and acidic residues: residues 32–48 and 111–125; these read GGDR…DKWS and QAEE…ETRQ. Residues 86 to 219 are a coiled coil; the sequence is QLEQQSKLKE…QIRLKAAEHR (134 aa). The helical transmembrane segment at 247–264 threads the bilayer; that stretch reads VTATVAGLTLLAVGVYSA. Residues 265 to 586 are Mitochondrial matrix-facing; sequence KNATLVAGRF…PGRGDEPSPS (322 aa). Residues 290–305 are S100B-binding; sequence RITVLEALRHPIQVSR. At serine 321 the chain carries Phosphoserine. 352–359 contributes to the ATP binding site; the sequence is GPPGTGKT. Lysine 491 carries the post-translational modification N6-acetyllysine.

This sequence belongs to the AAA ATPase family. As to quaternary structure, can form homooligomers. Homodimer formation at the N-terminus may be regulated by ATP and is required for the interaction with the inner surface of the mitochondrial outer membrane and correct mitochondrial homeostasis. Interacts with components of the mitochondrial ribosome and with other proteins involved in mitochondrial RNA metabolism. May also interact with protein involved in lipid metabolism, including STARD9. May interact with FAM210A. Interacts with GADD45GIP1. Interacts with S100B in a Ca(+2)- and Zn(+2)-dependent manner; this interaction probably occurs in the cytosol prior to mitochondrial targeting. S100B could assist ATAD3A cytoplasmic processing, preventing aggregation and favoring mitochondrial localization. Interacts with HSP60/HSPD1. Forms heterooligomers with ATAD3B; this interaction may affect ATAD3A activity. Interacts with CLPB. Interacts with EIF2AK3/PERK; ATAD3A and EIF2S1/eIF-2-alpha occupy a common binding site within the cytoplasmic loop of EIF2AK3/PERK, leading to prevent EIF2AK3/PERK association with its substrate EIF2S1/eIF-2-alpha. Overexpressed in lung adenocarcinomas (at protein level).

It localises to the mitochondrion inner membrane. The protein resides in the mitochondrion matrix. It is found in the mitochondrion nucleoid. It catalyses the reaction ATP + H2O = ADP + phosphate + H(+). In terms of biological role, essential for mitochondrial network organization, mitochondrial metabolism and cell growth at organism and cellular level. May play an important role in mitochondrial protein synthesis. May also participate in mitochondrial DNA replication. May bind to mitochondrial DNA D-loops and contribute to nucleoid stability. Required for enhanced channeling of cholesterol for hormone-dependent steroidogenesis. Involved in mitochondrial-mediated antiviral innate immunity. Required to protect mitochondria from the PERK-mediated unfolded protein response: specifically inhibits the activity of EIF2AK3/PERK at mitochondria-endoplasmic reticulum contact sites, thereby providing a safe haven for mitochondrial protein translation during endoplasmic reticulum stress. Ability to inhibit EIF2AK3/PERK is independent of its ATPase activity. Also involved in the mitochondrial DNA damage response by promoting signaling between damaged genomes and the mitochondrial membrane, leading to activation of the integrated stress response (ISR). This chain is ATPase family AAA domain-containing protein 3A, found in Homo sapiens (Human).